A 134-amino-acid chain; its full sequence is Protein Turandot E (134 aa).

Residues 1-38 (MSYTRTVHSSTSILKMNSALQISCLLVVLGCLLGSGHC) form the signal peptide.

It belongs to the Turandot family.

Its subcellular location is the secreted. Functionally, a humoral factor that may play a role in stress tolerance. The polypeptide is Protein Turandot E (Drosophila simulans (Fruit fly)).